The sequence spans 110 residues: U1-lycotoxin-Ls1mm (110 aa).

The N-terminal stretch at 1-20 (MKFVLLFGVLLVTLFSYSSA) is a signal peptide. Residues 21 to 44 (EMLDDFDQADEDELLSLIEKEEAR) constitute a propeptide that is removed on maturation. Intrachain disulfides connect cysteine 47/cysteine 62, cysteine 54/cysteine 71, cysteine 61/cysteine 89, and cysteine 73/cysteine 87.

The protein belongs to the neurotoxin 19 (CSTX) family. 03 subfamily. Expressed by the venom gland.

Its subcellular location is the secreted. The polypeptide is U1-lycotoxin-Ls1mm (Lycosa singoriensis (Wolf spider)).